Reading from the N-terminus, the 330-residue chain is Cyclin N-terminal domain-containing protein 1 (330 aa).

The 152-residue stretch at 27 to 178 (DALLHLAQQN…VLKSLNFRIN (152 aa)) folds into the Cyclin N-terminal domain.

Interacts with PRR19; this interaction promotes crossover formation. Interacts with RFC3 and RFC4; these interactions facilitate crossover formation. Interacts with CDC34; this interaction regulates the cell-cycle progression.

It is found in the nucleus. Its subcellular location is the cytoplasm. It localises to the chromosome. Functionally, plays a role in the different steps of crossover formation during meiotic recombination. Participates in the crossover differentiation step of crossover-specific recombination intermediates through its interaction with PRR19. In addition, stimulates crossover formation through the interactions with RFC3 and RFC4 and simultaneously regulates cell-cycle progression through interactions with CDC34 and subsequent ubiquitination of WEE1. May also participates in an active deselection process that destabilizes or removes excess pre-CO intermediates. In Homo sapiens (Human), this protein is Cyclin N-terminal domain-containing protein 1.